Consider the following 361-residue polypeptide: tRNA/tmRNA (uracil-C(5))-methyltransferase (361 aa).

Residues glutamine 183, tyrosine 211, asparagine 216, glutamate 232, and aspartate 294 each contribute to the S-adenosyl-L-methionine site. Cysteine 319 functions as the Nucleophile in the catalytic mechanism. The active-site Proton acceptor is glutamate 353.

Belongs to the class I-like SAM-binding methyltransferase superfamily. RNA M5U methyltransferase family. TrmA subfamily.

The catalysed reaction is uridine(54) in tRNA + S-adenosyl-L-methionine = 5-methyluridine(54) in tRNA + S-adenosyl-L-homocysteine + H(+). It carries out the reaction uridine(341) in tmRNA + S-adenosyl-L-methionine = 5-methyluridine(341) in tmRNA + S-adenosyl-L-homocysteine + H(+). Functionally, dual-specificity methyltransferase that catalyzes the formation of 5-methyluridine at position 54 (m5U54) in all tRNAs, and that of position 341 (m5U341) in tmRNA (transfer-mRNA). This chain is tRNA/tmRNA (uracil-C(5))-methyltransferase, found in Acinetobacter baumannii (strain AYE).